The chain runs to 773 residues: MGDEDEDEGCAVELQITEANLTGHEEKVSVENFALLKVLGTGAYGKVFLVRKTGGHDAGKLYAMKVLRKAALVQRAKTQEHTRTERSVLELVRQAPFLVTLHYAFQTDAKLHLILDYVSGGEMFTHLYQRQYFKEAEVRVYGGEIVLALEHLHKLGIIYRDLKLENVLLDSEGHIVLTDFGLSKEFLTEEKERTFSFCGTIEYMAPEIIRSKAGHGKAVDWWSLGILLFELLTGASPFTLEGERNTQAEVSRRILKCSPPFPLRIGPVAQDLLQRLLCKDPKKRLGAGPQGAQEVKSHPFFQGLDWVALAARKIPAPFRPQIRSELDVGNFAEEFTRLEPVYSPAGSPPPGDPRIFQGYSFVAPSILFDHNNAVMADVLQAPGAGYRPGRAAVARSAMMQDSPFFQQYELDLREPALGQGSFSVCRRCRQRQSGQEFAVKILSRRLEENTQREVAALRLCQSHPNVVNLHEVLHDQLHTYLVLELLRGGELLEHIRKKRLFSESEASQILRSLVSAVSFMHEEAGVVHRDLKPENILYADDTPGAPVKIIDFGFARLRPQSPAEPMQTPCFTLQYAAPELLAQQGYDESCDLWSLGVILYMMLSGQVPFQGASGQGGQSQAAEIMCKIREGRFSLDGEAWQGVSEEAKELVRGLLTVDPAKRLKLEGLRSSSWLQDGSARSSPPLRTPDVLESSGPAVRSGLNATFMAFNRGKREGFFLKSVENAPLAKRRKQKLRSAAASRRGSPVPASSGRLPASAAKGTTRRANGPLSPS.

The 269-residue stretch at 33 to 301 (FALLKVLGTG…AQEVKSHPFF (269 aa)) folds into the Protein kinase 1 domain. ATP contacts are provided by residues 39-47 (LGTGAYGKV) and K65. D161 acts as the Proton acceptor in catalysis. S196 carries the phosphoserine; by autocatalysis modification. Positions 302 to 371 (QGLDWVALAA…VAPSILFDHN (70 aa)) constitute an AGC-kinase C-terminal domain. S343 is modified (phosphoserine; by MAPK1, MAPK3 and MAPK14). S347 is subject to Phosphoserine. Phosphoserine; by autocatalysis is present on residues S360 and S365. Residues 417 to 425 (LGQGSFSVC) and K440 each bind ATP. The region spanning 417 to 674 (LGQGSFSVCR…LEGLRSSSWL (258 aa)) is the Protein kinase 2 domain. Catalysis depends on D530, which acts as the Proton acceptor. Residue T542 is modified to Phosphothreonine. Residue T568 is modified to Phosphothreonine; by MAPK1, MAPK3 and MAPK14. Residues S634 and S678 each carry the phosphoserine modification. 2 disordered regions span residues 674 to 696 (LQDG…SSGP) and 728 to 773 (AKRR…LSPS). T687 carries the phosphothreonine modification. Phosphoserine; by autocatalysis is present on residues S737 and S745.

Belongs to the protein kinase superfamily. AGC Ser/Thr protein kinase family. S6 kinase subfamily. In terms of assembly, forms a complex with either MAPK1/ERK2 or MAPK3/ERK1 in quiescent cells which transiently dissociates following mitogenic stimulation. Also associates with MAPK14/p38-alpha. Activated RPS6KA4 associates with and phosphorylates the NF-kappa-B p65 subunit RELA. Requires Mg(2+) as cofactor. In terms of processing, ser-343 and Thr-568 phosphorylation is required for kinase activity. Ser-343 and Ser-196 are autophosphorylated by the C-terminal kinase domain, and their phosphorylation is essential for the catalytic activity of the N-terminal kinase domain. Phosphorylated at Ser-343, Thr-568 and Thr-687 by MAPK1/ERK2, MAPK3/ERK1 and MAPK14/p38-alpha. Autophosphorylated at Ser-737 and Ser-745 by the N-terminal kinase domain.

The protein resides in the nucleus. The catalysed reaction is L-seryl-[protein] + ATP = O-phospho-L-seryl-[protein] + ADP + H(+). It catalyses the reaction L-threonyl-[protein] + ATP = O-phospho-L-threonyl-[protein] + ADP + H(+). Activated by phosphorylation at Ser-343, Thr-568 and Thr-687 by MAPK1/ERK2, MAPK3/ERK1 and MAPK14/p38-alpha, and by further autophosphorylation of Ser-196, Ser-360 and Ser-365 by the activated C-terminal kinase domain. Its function is as follows. Serine/threonine-protein kinase that is required for the mitogen or stress-induced phosphorylation of the transcription factors CREB1 and ATF1 and for the regulation of the transcription factor RELA, and that contributes to gene activation by histone phosphorylation and functions in the regulation of inflammatory genes. Phosphorylates CREB1 and ATF1 in response to mitogenic or stress stimuli such as UV-C irradiation, epidermal growth factor (EGF) and anisomycin. Plays an essential role in the control of RELA transcriptional activity in response to TNF. Phosphorylates 'Ser-10' of histone H3 in response to mitogenics, stress stimuli and EGF, which results in the transcriptional activation of several immediate early genes, including proto-oncogenes c-fos/FOS and c-jun/JUN. May also phosphorylate 'Ser-28' of histone H3. Mediates the mitogen- and stress-induced phosphorylation of high mobility group protein 1 (HMGN1/HMG14). In lipopolysaccharide-stimulated primary macrophages, acts downstream of the Toll-like receptor TLR4 to limit the production of pro-inflammatory cytokines. Functions probably by inducing transcription of the MAP kinase phosphatase DUSP1 and the anti-inflammatory cytokine interleukin 10 (IL10), via CREB1 and ATF1 transcription factors. This chain is Ribosomal protein S6 kinase alpha-4 (Rps6ka4), found in Mus musculus (Mouse).